Here is a 490-residue protein sequence, read N- to C-terminus: Probable cytosol aminopeptidase (490 aa).

2 residues coordinate Mn(2+): lysine 257 and aspartate 262. Lysine 269 is an active-site residue. Positions 281, 341, and 343 each coordinate Mn(2+). The active site involves arginine 345.

This sequence belongs to the peptidase M17 family. The cofactor is Mn(2+).

It is found in the cytoplasm. It catalyses the reaction Release of an N-terminal amino acid, Xaa-|-Yaa-, in which Xaa is preferably Leu, but may be other amino acids including Pro although not Arg or Lys, and Yaa may be Pro. Amino acid amides and methyl esters are also readily hydrolyzed, but rates on arylamides are exceedingly low.. The catalysed reaction is Release of an N-terminal amino acid, preferentially leucine, but not glutamic or aspartic acids.. In terms of biological role, presumably involved in the processing and regular turnover of intracellular proteins. Catalyzes the removal of unsubstituted N-terminal amino acids from various peptides. The chain is Probable cytosol aminopeptidase from Prochlorococcus marinus (strain MIT 9215).